We begin with the raw amino-acid sequence, 318 residues long: Inactive dihydropteroate synthase 2 (318 aa).

Positions M1 to A25 are disordered. The Pterin-binding domain occupies A42–E299.

The protein belongs to the DHPS family. Homodimer.

Functionally, has very low affinity for the DHPS substrate 6-hydroxymethyl-7,8-dihydropterin-pyrophosphate, but can bind the inhibitor dapsone. Seems to lack dihydropteroate synthase activity, and does probably not function in folate metabolism. The sequence is that of Inactive dihydropteroate synthase 2 (folP2) from Mycobacterium bovis (strain ATCC BAA-935 / AF2122/97).